The primary structure comprises 243 residues: Adenosylcobinamide-GDP ribazoletransferase (243 aa).

The next 5 helical transmembrane spans lie at 31-48 (LLFY…LWVL), 61-81 (AALL…DGLA), 109-129 (IAVV…VALI), 134-154 (GFAL…LFLC), and 188-208 (LLLG…LFFW).

Belongs to the CobS family. Requires Mg(2+) as cofactor.

It localises to the cell inner membrane. The enzyme catalyses alpha-ribazole + adenosylcob(III)inamide-GDP = adenosylcob(III)alamin + GMP + H(+). It carries out the reaction alpha-ribazole 5'-phosphate + adenosylcob(III)inamide-GDP = adenosylcob(III)alamin 5'-phosphate + GMP + H(+). It participates in cofactor biosynthesis; adenosylcobalamin biosynthesis; adenosylcobalamin from cob(II)yrinate a,c-diamide: step 7/7. In terms of biological role, joins adenosylcobinamide-GDP and alpha-ribazole to generate adenosylcobalamin (Ado-cobalamin). Also synthesizes adenosylcobalamin 5'-phosphate from adenosylcobinamide-GDP and alpha-ribazole 5'-phosphate. This Pseudomonas fluorescens (strain ATCC BAA-477 / NRRL B-23932 / Pf-5) protein is Adenosylcobinamide-GDP ribazoletransferase.